Consider the following 179-residue polypeptide: Protein TIFY 11a (179 aa).

One can recognise a Tify domain in the interval 62-97; that stretch reads VDGGGQQFTIFYAGKVVVIDRCTPAMAAELMRFASA. The short motif at 115–140 is the Jas element; it reads PIARKASLKRFLAKRKATPASARSSY. A Nuclear localization signal motif is present at residues 117–124; it reads ARKASLKR.

It belongs to the TIFY/JAZ family. As to quaternary structure, interacts with BHLH148. Interacts with COI1A in a coronatine-dependent manner. Interacts with COI1B in a coronatine-dependent manner. Coronatine is an analog of jasmonoyl isoleucine (JA-Ile). Interacts with RSS3. Forms a ternary complex with RSS3 and BHLH094 in the nucleus. Interacts with BHLH062 and NINJA1. Interacts with MYB30. In terms of processing, ubiquitinated. Targeted for degradation by the SCF(COI1) E3 ubiquitin ligase-proteasome pathway during jasmonate signaling.

It localises to the nucleus. Repressor of jasmonate (JA) responses. Forms a ternary complex with RSS3 and BHLH94 to negatively regulate JA-responsive genes. Acts as a positive regulator of tolerance to salt stress. Involved in salt tolerance by modulating potassium homeostasis through JA signaling and regulation of the expression of potassium ion transporter genes. Acts as a transcriptional regulator targeted by the SCF(COI1) E3 ubiquitin ligase complexes in the JA signaling pathway, and interacts with BHLH062 that may directly regulate the ion transporter genes. Acts as a positive regulator of tolerance to dehydration stress. Acts as a negative regulator of tolerance to cold stress by interacting with MYB30. This chain is Protein TIFY 11a, found in Oryza sativa subsp. japonica (Rice).